The sequence spans 540 residues: Phosphoenolpyruvate carboxykinase (ATP) (540 aa).

Arginine 65 contacts substrate. Lysine 87 carries the N6-acetyllysine modification. 2 residues coordinate substrate: tyrosine 207 and lysine 213. Residues lysine 213, histidine 232, and 248–256 (GLSGTGKTT) each bind ATP. Mn(2+)-binding residues include lysine 213 and histidine 232. Residue aspartate 269 coordinates Mn(2+). ATP-binding positions include glutamate 297, arginine 333, 449–450 (RI), and threonine 455. Arginine 333 serves as a coordination point for substrate. An N6-acetyllysine modification is found at lysine 523.

Belongs to the phosphoenolpyruvate carboxykinase (ATP) family. In terms of assembly, monomer. Mn(2+) is required as a cofactor.

It localises to the cytoplasm. It catalyses the reaction oxaloacetate + ATP = phosphoenolpyruvate + ADP + CO2. It participates in carbohydrate biosynthesis; gluconeogenesis. Functionally, involved in the gluconeogenesis. Catalyzes the conversion of oxaloacetate (OAA) to phosphoenolpyruvate (PEP) through direct phosphoryl transfer between the nucleoside triphosphate and OAA. This Escherichia coli O6:H1 (strain CFT073 / ATCC 700928 / UPEC) protein is Phosphoenolpyruvate carboxykinase (ATP).